Consider the following 278-residue polypeptide: Sulfur carrier protein FdhD (278 aa).

The Cysteine persulfide intermediate role is filled by C124.

The protein belongs to the FdhD family.

It localises to the cytoplasm. Its function is as follows. Required for formate dehydrogenase (FDH) activity. Acts as a sulfur carrier protein that transfers sulfur from IscS to the molybdenum cofactor prior to its insertion into FDH. The sequence is that of Sulfur carrier protein FdhD from Burkholderia cenocepacia (strain ATCC BAA-245 / DSM 16553 / LMG 16656 / NCTC 13227 / J2315 / CF5610) (Burkholderia cepacia (strain J2315)).